Here is an 824-residue protein sequence, read N- to C-terminus: MKPIPAAPEPLGQHQDSPRRKDKGEAESERQRTRERLEATLAGLAELGHLRHRQEVLIKSVLSPGTRTHGDAAARTGDNPRSLEEKFLEDNILLLKKQLNCLRKRDAGLLSQLHELDKQINDLRIDVEKTEEHLETDSRPSSGFYELSDGTSGSLSNSSNSVFSECLSSCHSSTCFCNPLETSLNLTDGQAKSADDFLEWLDYRESQHETGTVRRSFSAPHSNSVDIEADVHPKYQCDLVSKNGNDIYRYPSPLHAVAVQSPMFLLSVMGNIKAEEPEEGIDHNDNDDCIVPELDHLKDEDSFLHQSSLCSLPLSSAKKMDGYILSIIQKKAHPVRTNKPRTSVNADPGKGILRHGSMCVKQTGGVSQSNAVNLKNSKQTCLHSTGMIAVDNSTYPSLKQCSKESLSEQLESKRMPSISTYPSCNVNELQSQNNSRNTVKSVCQGLARGSVAMTSNVQKENVTPNALANLSNTSSSVCNVTPGESMQNSPLLPQEIKVVPPVKRVSPQNTLLSYHASSSFDERPPLDFKSEGSSSQSLDEGLLVNAHYIPAQQQGVKLHKHTKYVKIVKSSTLKHRANVQYVAENGSQTLKEKSKVVGKKCRFPDDLDTNKKVKKSTLRVKKTAHPHFEPAVVGRNPVAVRSGSKSHGHSKDVVLAKPKHKRGDYRRWKSSAEISYEEALRRARRRAQGEMVGVYAQVPFPYSSPYAYIASDSEYSAECESLFHSTVVDTSEDEQSNYTTNCFGDSESSLSEVEFVGESTTSSDTDESGGLIWSQFVQTLPMQATATAELQTTAKAFVKIKASHNLKKKILRFRSGSLKLMTTV.

Disordered regions lie at residues 1–33 (MKPIPAAPEPLGQHQDSPRRKDKGEAESERQRT), 131–150 (EEHLETDSRPSSGFYELSDG), and 515–534 (HASSSFDERPPLDFKSEGSS). Positions 2 to 343 (KPIPAAPEPL…PVRTNKPRTS (342 aa)) are interaction with tcf7l1-A. Over residues 16-33 (DSPRRKDKGEAESERQRT) the composition is skewed to basic and acidic residues. The stretch at 84–139 (EEKFLEDNILLLKKQLNCLRKRDAGLLSQLHELDKQINDLRIDVEKTEEHLETDSR) forms a coiled coil. Residues 520 to 530 (FDERPPLDFKS) are compositionally biased toward basic and acidic residues. Positions 821-824 (MTTV) match the PDZ-binding motif.

It belongs to the dapper family. As to quaternary structure, interacts with dbf4 and tcf7l1-A. Interacts with dvl2/dsh; the interaction is required for dact1-b phosphorylation by CaMK1D and seems to become disrupted by the phosphorylation. Phosphorylated by CaMK1D; the phosphorylation requires binding to dvl2/dsh. In terms of tissue distribution, expressed both in the dorsal lip in early gastrula and throughout the posterior presumptive ectoderm in early neurula. Expressed in the dorsal neural folds at the tailbud stage and highly expressed in the tadpole head, including the brain, retina and cartilaginous branchial arch derivatives.

The protein resides in the cytoplasm. It is found in the nucleus. Functionally, involved in regulation of intracellular signaling pathways during development. Specifically thought to play a role in canonical and/or non-canonical Wnt signaling pathways through interaction with DSH (Dishevelled) family proteins. Binds to dvl2 to regulate the degradation of beta-catenin (ctnnb1-A and possibly ctnnb1-B), thereby modulating the transcriptional activation of target genes of the Wnt signaling pathway. Seems to promote beta-catenin degradation if not phosphorylated and to block beta-catenin degradation if phosphorylated by CaMK1D. Involved in regulation of catenin delta/ctnnd1 protein level. May also bind to and directly stimulate the activity of tcf7l1-A. Also regulates the activation by dvl2 of jnk, a component of ctnnb1/beta-catenin-independent frizzled signaling. Required for notochord and head formation. This is Dapper 1-B (dact1-b) from Xenopus laevis (African clawed frog).